The following is an 833-amino-acid chain: EF-hand domain-containing family member B (833 aa).

EF-hand domains follow at residues 561 to 596 and 597 to 632; these read QKFD…ANLS and LDDK…KDKM. The Ca(2+) site is built by D574, D578, M580, E585, D610, D612, D614, and E621.

Microtubule inner protein component of sperm flagellar doublet microtubules. Interacts with STIM1 and ORAI1; the interactions take place upon Ca(2+)-store depletion and dissociate through a Ca(2+)-dependent mechanism. Interaction with STIM1 inhibits STIM1 interaction with SARAF. Expressed in airway epithelial cells.

It localises to the cytoplasm. The protein resides in the cytoskeleton. The protein localises to the cilium axoneme. Its subcellular location is the flagellum axoneme. Microtubule inner protein (MIP) part of the dynein-decorated doublet microtubules (DMTs) in cilia axoneme, which is required for motile cilia beating. Cytosolic sensor for calcium, modulates the interaction of STIM1 and ORAI1 upon store depletion and the activation of store-operated Ca(2+) entry (SOCE) and NFAT translocation from cytosol to nucleus. This chain is EF-hand domain-containing family member B, found in Homo sapiens (Human).